The chain runs to 320 residues: Lipoyl synthase (320 aa).

A compositionally biased stretch (polar residues) spans 1-11 (MGGMNDLSSTP). Residues 1–24 (MGGMNDLSSTPAPEGDRPARQRKP) form a disordered region. Positions 14–24 (EGDRPARQRKP) are enriched in basic and acidic residues. [4Fe-4S] cluster is bound by residues Cys-53, Cys-58, Cys-64, Cys-79, Cys-83, Cys-86, and Ser-293. A Radical SAM core domain is found at 65-282 (WTKKHATVMI…GAIARAKGFL (218 aa)).

Belongs to the radical SAM superfamily. Lipoyl synthase family. [4Fe-4S] cluster is required as a cofactor.

It localises to the cytoplasm. It carries out the reaction [[Fe-S] cluster scaffold protein carrying a second [4Fe-4S](2+) cluster] + N(6)-octanoyl-L-lysyl-[protein] + 2 oxidized [2Fe-2S]-[ferredoxin] + 2 S-adenosyl-L-methionine + 4 H(+) = [[Fe-S] cluster scaffold protein] + N(6)-[(R)-dihydrolipoyl]-L-lysyl-[protein] + 4 Fe(3+) + 2 hydrogen sulfide + 2 5'-deoxyadenosine + 2 L-methionine + 2 reduced [2Fe-2S]-[ferredoxin]. It functions in the pathway protein modification; protein lipoylation via endogenous pathway; protein N(6)-(lipoyl)lysine from octanoyl-[acyl-carrier-protein]: step 2/2. Catalyzes the radical-mediated insertion of two sulfur atoms into the C-6 and C-8 positions of the octanoyl moiety bound to the lipoyl domains of lipoate-dependent enzymes, thereby converting the octanoylated domains into lipoylated derivatives. The sequence is that of Lipoyl synthase from Erythrobacter litoralis (strain HTCC2594).